A 241-amino-acid chain; its full sequence is Large ribosomal subunit protein uL13c (241 aa).

Residues 1–50 (MAVLCSSSTVILSSSSVKSSGSERKSPFLGFSLTAISKPSVRVGIYANSK) constitute a chloroplast transit peptide.

It belongs to the universal ribosomal protein uL13 family. As to quaternary structure, part of the 50S ribosomal subunit.

It localises to the plastid. It is found in the chloroplast. This is Large ribosomal subunit protein uL13c (RPL13) from Arabidopsis thaliana (Mouse-ear cress).